Reading from the N-terminus, the 418-residue chain is Putative competence-damage inducible protein (418 aa).

Belongs to the CinA family.

The chain is Putative competence-damage inducible protein from Streptococcus gordonii (strain Challis / ATCC 35105 / BCRC 15272 / CH1 / DL1 / V288).